A 433-amino-acid polypeptide reads, in one-letter code: Ribosome biogenesis protein WDR12 homolog (433 aa).

M1 carries the post-translational modification N-acetylmethionine. The tract at residues 12–96 is ubiquitin-like (UBL) domain; it reads LHVKFVTKLD…ERTLEIEYIR (85 aa). 7 WD repeats span residues 108-146, 148-191, 203-242, 270-308, 310-350, 356-396, and 399-433; these read LHDD…SHIL, GHSG…SVDS, GHKA…SEGE, GHTQ…DSLN, FCGK…TSAP, SHSS…PLSV, and THND…IAIS. Positions 238 to 263 are disordered; it reads TSEGESVSVKKRKGNNQAEESQSEGE.

This sequence belongs to the WD repeat WDR12/YTM1 family. Interacts with PES. Interacts with BOP1.

It localises to the nucleus. It is found in the nucleolus. Its subcellular location is the nucleoplasm. Its function is as follows. Required for maturation of ribosomal RNAs and formation of the large ribosomal subunit. This chain is Ribosome biogenesis protein WDR12 homolog, found in Arabidopsis thaliana (Mouse-ear cress).